Reading from the N-terminus, the 505-residue chain is Xylose import ATP-binding protein XylG (505 aa).

2 ABC transporter domains span residues 6–243 and 262–505; these read LEMR…VGRE and VKNY…TGGK. Position 38–45 (38–45) interacts with ATP; the sequence is GENGAGKS.

Belongs to the ABC transporter superfamily. Xylose importer (TC 3.A.1.2.4) family. The complex is composed of two ATP-binding proteins (XylG), two transmembrane proteins (XylH) and a solute-binding protein (XylF).

The protein localises to the cell membrane. The enzyme catalyses D-xylose(out) + ATP + H2O = D-xylose(in) + ADP + phosphate + H(+). In terms of biological role, part of the ABC transporter complex XylFGH involved in xylose import. Responsible for energy coupling to the transport system. The chain is Xylose import ATP-binding protein XylG from Thermoanaerobacter pseudethanolicus (strain ATCC 33223 / 39E) (Clostridium thermohydrosulfuricum).